Reading from the N-terminus, the 526-residue chain is Histidine ammonia-lyase (526 aa).

The segment at residues 143 to 145 (ASG) is a cross-link (5-imidazolinone (Ala-Gly)). 2,3-didehydroalanine (Ser) is present on serine 144.

It belongs to the PAL/histidase family. In terms of processing, contains an active site 4-methylidene-imidazol-5-one (MIO), which is formed autocatalytically by cyclization and dehydration of residues Ala-Ser-Gly.

Its subcellular location is the cytoplasm. It catalyses the reaction L-histidine = trans-urocanate + NH4(+). It functions in the pathway amino-acid degradation; L-histidine degradation into L-glutamate; N-formimidoyl-L-glutamate from L-histidine: step 1/3. The chain is Histidine ammonia-lyase from Aromatoleum aromaticum (strain DSM 19018 / LMG 30748 / EbN1) (Azoarcus sp. (strain EbN1)).